Reading from the N-terminus, the 57-residue chain is Small ribosomal subunit protein bS21 (57 aa).

The tract at residues 24-57 (SKSGTLQESRKREFYEKPSVKRKKKSEAARKRKF) is disordered. Positions 31 to 42 (ESRKREFYEKPS) are enriched in basic and acidic residues. The segment covering 43-57 (VKRKKKSEAARKRKF) has biased composition (basic residues).

The protein belongs to the bacterial ribosomal protein bS21 family.

The sequence is that of Small ribosomal subunit protein bS21 (rpsU) from Listeria innocua serovar 6a (strain ATCC BAA-680 / CLIP 11262).